The chain runs to 452 residues: Bis(5'-adenosyl)-triphosphatase ENPP4 (452 aa).

A signal peptide spans 1 to 15; that stretch reads MKLLVILLFSGLITG. The Extracellular portion of the chain corresponds to 16–406; sequence FRSDSSSSLP…DQWCINLPEA (391 aa). Zn(2+) contacts are provided by D34 and T70. Catalysis depends on T70, which acts as the AMP-threonine intermediate. The substrate site is built by N91 and Y154. N-linked (GlcNAc...) asparagine glycosylation is found at N155 and N166. Positions 189, 193, 237, and 238 each coordinate Zn(2+). Substrate is bound at residue D189. C254 and C287 are joined by a disulfide. N276 carries an N-linked (GlcNAc...) asparagine glycan. H335 contributes to the Zn(2+) binding site. A disulfide bridge connects residues C393 and C400. The helical transmembrane segment at 407-427 threads the bilayer; it reads IAIVIGSLLVLTMLTCLIIIM. At 428–452 the chain is on the cytoplasmic side; the sequence is QNRLSVPRPFSRLQLQEDDDDPLIG.

This sequence belongs to the nucleotide pyrophosphatase/phosphodiesterase family. It depends on Zn(2+) as a cofactor.

Its subcellular location is the cell membrane. The enzyme catalyses P(1),P(3)-bis(5'-adenosyl) triphosphate + H2O = AMP + ADP + 2 H(+). In terms of biological role, hydrolyzes extracellular Ap3A into AMP and ADP, and Ap4A into AMP and ATP. Ap3A and Ap4A are diadenosine polyphosphates thought to induce proliferation of vascular smooth muscle cells. Acts as a procoagulant, mediating platelet aggregation at the site of nascent thrombus via release of ADP from Ap3A and activation of ADP receptors. The protein is Bis(5'-adenosyl)-triphosphatase ENPP4 (ENPP4) of Pongo abelii (Sumatran orangutan).